Consider the following 181-residue polypeptide: ATP synthase subunit b, chloroplastic (181 aa).

Residues 28 to 50 (IINLSVVLGVLIYFGKGVLSNLL) traverse the membrane as a helical segment.

Belongs to the ATPase B chain family. In terms of assembly, F-type ATPases have 2 components, F(1) - the catalytic core - and F(0) - the membrane proton channel. F(1) has five subunits: alpha(3), beta(3), gamma(1), delta(1), epsilon(1). F(0) has four main subunits: a(1), b(1), b'(1) and c(10-14). The alpha and beta chains form an alternating ring which encloses part of the gamma chain. F(1) is attached to F(0) by a central stalk formed by the gamma and epsilon chains, while a peripheral stalk is formed by the delta, b and b' chains.

Its subcellular location is the plastid. It localises to the chloroplast thylakoid membrane. F(1)F(0) ATP synthase produces ATP from ADP in the presence of a proton or sodium gradient. F-type ATPases consist of two structural domains, F(1) containing the extramembraneous catalytic core and F(0) containing the membrane proton channel, linked together by a central stalk and a peripheral stalk. During catalysis, ATP synthesis in the catalytic domain of F(1) is coupled via a rotary mechanism of the central stalk subunits to proton translocation. Its function is as follows. Component of the F(0) channel, it forms part of the peripheral stalk, linking F(1) to F(0). The polypeptide is ATP synthase subunit b, chloroplastic (Cryptomeria japonica (Japanese cedar)).